The sequence spans 417 residues: Phosphoglycerate kinase 1 (417 aa).

N-acetylserine is present on S2. S2 and S4 each carry phosphoserine. K6 is modified (N6-succinyllysine). K11 is modified (N6-acetyllysine). V23, D24, F25, N26, Q38, R39, S62, H63, G65, and R66 together coordinate (2R)-3-phosphoglycerate. The interval 38-43 (QRIKAA) is mitochondrial targeting region exposed following cis-trans isomerization by PIN1 and recognized by the TOM complex for mitochondrial translocation of the protein. At K75 the chain carries N6-acetyllysine. Position 76 is a phosphotyrosine (Y76). N6-acetyllysine occurs at positions 86 and 91. K97 carries the post-translational modification N6-(2-hydroxyisobutyryl)lysine; alternate. Position 97 is an N6-acetyllysine; alternate (K97). 2 residues coordinate (2R)-3-phosphoglycerate: L122 and R123. K131 is subject to N6-acetyllysine; alternate. An N6-malonyllysine; alternate modification is found at K131. K146 is modified (N6-acetyllysine). The (2R)-3-phosphoglycerate site is built by H170 and R171. K191 carries the post-translational modification N6-succinyllysine. Y196 carries the post-translational modification Phosphotyrosine. K199 is modified (N6-acetyllysine). The residue at position 203 (S203) is a Phosphoserine. G214 is a binding site for ADP. G214 serves as a coordination point for CDP. Residues A215 and K216 each contribute to the AMP site. A215 contributes to the ATP binding site. Position 215 (A215) interacts with Mg(2+). K216 is subject to N6-(2-hydroxyisobutyryl)lysine. Mg(2+) contacts are provided by A218 and D219. CDP is bound at residue D219. K220 is a binding site for AMP. K220 contributes to the ATP binding site. K220 is modified (N6-(2-hydroxyisobutyryl)lysine). G238 provides a ligand contact to ADP. G238 provides a ligand contact to CDP. G239 is an AMP binding site. Residue G239 participates in ATP binding. N6-acetyllysine occurs at positions 267 and 291. G313 contacts AMP. Position 313 (G313) interacts with ATP. Position 323 is an N6-(2-hydroxyisobutyryl)lysine (K323). Residues G338, V340, and F343 each coordinate CDP. Residue F343 participates in ADP binding. E344 provides a ligand contact to AMP. E344, D375, and T376 together coordinate ATP. D375 lines the Mg(2+) pocket.

It belongs to the phosphoglycerate kinase family. Monomer. Interacts with kinase MAPK1/ERK2; the interaction is direct, occurs under hypoxic conditions, and promotes its interaction with PIN1. Interacts with peptidyl-prolyl cis-trans isomerase PIN1; the interaction is direct, occurs under hypoxic conditions, and targets the protein to the mitochondrion by promoting interactions with the TOM complex. Interacts with mitochondrial circRNA mcPGK1 (via its 2nd stem-loop); the interaction is direct and targets the protein to the mitochondrion by promoting interactions with the TOM complex. Interacts with pyruvate dehydrogenase kinase PDK1; the interaction is direct, occurs under hypoxic conditions and leads to PDK1-mediated inhibition of pyruvate dehydrogenase complex activity. It depends on Mg(2+) as a cofactor. Phosphorylated at Ser-203 by MAPK1/ERK2 under hypoxic conditions, which promotes its mitochondrial targeting.

It localises to the cytoplasm. Its subcellular location is the cytosol. It is found in the mitochondrion matrix. It catalyses the reaction (2R)-3-phosphoglycerate + ATP = (2R)-3-phospho-glyceroyl phosphate + ADP. The catalysed reaction is L-seryl-[protein] + ATP = O-phospho-L-seryl-[protein] + ADP + H(+). It functions in the pathway carbohydrate degradation; glycolysis; pyruvate from D-glyceraldehyde 3-phosphate: step 2/5. In terms of biological role, catalyzes one of the two ATP producing reactions in the glycolytic pathway via the reversible conversion of 1,3-diphosphoglycerate to 3-phosphoglycerate. Both L- and D- forms of purine and pyrimidine nucleotides can be used as substrates, but the activity is much lower on pyrimidines. In addition to its role as a glycolytic enzyme, it seems that PGK-1 acts as a polymerase alpha cofactor protein (primer recognition protein). Acts as a protein kinase when localized to the mitochondrion where it phosphorylates pyruvate dehydrogenase kinase PDK1 to inhibit pyruvate dehydrogenase complex activity and suppress the formation of acetyl-coenzyme A from pyruvate, and consequently inhibit oxidative phosphorylation and promote glycolysis. May play a role in sperm motility. This is Phosphoglycerate kinase 1 (PGK1) from Notamacropus eugenii (Tammar wallaby).